Reading from the N-terminus, the 143-residue chain is Small ribosomal subunit protein uS9 (143 aa).

The tract at residues 123-143 (RPEPKKFGGRGARSRFQKSYR) is disordered. A compositionally biased stretch (basic residues) spans 134 to 143 (ARSRFQKSYR).

The protein belongs to the universal ribosomal protein uS9 family.

This chain is Small ribosomal subunit protein uS9 (RPS16), found in Kluyveromyces lactis (strain ATCC 8585 / CBS 2359 / DSM 70799 / NBRC 1267 / NRRL Y-1140 / WM37) (Yeast).